A 447-amino-acid polypeptide reads, in one-letter code: tRNA-2-methylthio-N(6)-dimethylallyladenosine synthase (447 aa).

The region spanning 14–130 is the MTTase N-terminal domain; that stretch reads KKVYIRTFGC…LPAMIANAGQ (117 aa). 6 residues coordinate [4Fe-4S] cluster: Cys23, Cys59, Cys93, Cys166, Cys170, and Cys173. A Radical SAM core domain is found at 152–382; that stretch reads RSGTISAFIP…IALQGSISGE (231 aa). In terms of domain architecture, TRAM spans 385–447; it reads AAEVGAVVEV…TPATLIGTPA (63 aa).

Belongs to the methylthiotransferase family. MiaB subfamily. Monomer. [4Fe-4S] cluster serves as cofactor.

Its subcellular location is the cytoplasm. The catalysed reaction is N(6)-dimethylallyladenosine(37) in tRNA + (sulfur carrier)-SH + AH2 + 2 S-adenosyl-L-methionine = 2-methylsulfanyl-N(6)-dimethylallyladenosine(37) in tRNA + (sulfur carrier)-H + 5'-deoxyadenosine + L-methionine + A + S-adenosyl-L-homocysteine + 2 H(+). Its function is as follows. Catalyzes the methylthiolation of N6-(dimethylallyl)adenosine (i(6)A), leading to the formation of 2-methylthio-N6-(dimethylallyl)adenosine (ms(2)i(6)A) at position 37 in tRNAs that read codons beginning with uridine. The chain is tRNA-2-methylthio-N(6)-dimethylallyladenosine synthase from Chlorobium phaeobacteroides (strain BS1).